The primary structure comprises 115 residues: NAD(P)H-quinone oxidoreductase subunit M (115 aa).

It belongs to the complex I NdhM subunit family. In terms of assembly, NDH-1 can be composed of about 15 different subunits; different subcomplexes with different compositions have been identified which probably have different functions.

The protein localises to the cellular thylakoid membrane. It catalyses the reaction a plastoquinone + NADH + (n+1) H(+)(in) = a plastoquinol + NAD(+) + n H(+)(out). It carries out the reaction a plastoquinone + NADPH + (n+1) H(+)(in) = a plastoquinol + NADP(+) + n H(+)(out). In terms of biological role, NDH-1 shuttles electrons from an unknown electron donor, via FMN and iron-sulfur (Fe-S) centers, to quinones in the respiratory and/or the photosynthetic chain. The immediate electron acceptor for the enzyme in this species is believed to be plastoquinone. Couples the redox reaction to proton translocation, and thus conserves the redox energy in a proton gradient. Cyanobacterial NDH-1 also plays a role in inorganic carbon-concentration. In Prochlorococcus marinus (strain MIT 9312), this protein is NAD(P)H-quinone oxidoreductase subunit M.